The primary structure comprises 606 residues: Glutamine--fructose-6-phosphate aminotransferase [isomerizing] (606 aa).

Catalysis depends on cysteine 2, which acts as the Nucleophile; for GATase activity. A Glutamine amidotransferase type-2 domain is found at 2–217 (CGIVGMVGEN…DGDVMVLRKD (216 aa)). SIS domains lie at 284–423 (YEEL…INGY) and 455–596 (LSEK…PDKP). Lysine 601 acts as the For Fru-6P isomerization activity in catalysis.

Homodimer.

Its subcellular location is the cytoplasm. The catalysed reaction is D-fructose 6-phosphate + L-glutamine = D-glucosamine 6-phosphate + L-glutamate. In terms of biological role, catalyzes the first step in hexosamine metabolism, converting fructose-6P into glucosamine-6P using glutamine as a nitrogen source. The chain is Glutamine--fructose-6-phosphate aminotransferase [isomerizing] from Thermotoga maritima (strain ATCC 43589 / DSM 3109 / JCM 10099 / NBRC 100826 / MSB8).